Consider the following 255-residue polypeptide: 4-hydroxy-tetrahydrodipicolinate reductase (255 aa).

Residues 9–14 (GFKGRM), 89–91 (GTT), and 115–118 (APNF) each bind NAD(+). The Proton donor/acceptor role is filled by H145. (S)-2,3,4,5-tetrahydrodipicolinate is bound at residue H146. K149 serves as the catalytic Proton donor. (S)-2,3,4,5-tetrahydrodipicolinate is bound at residue 155 to 156 (GT).

It belongs to the DapB family.

It localises to the cytoplasm. The catalysed reaction is (S)-2,3,4,5-tetrahydrodipicolinate + NAD(+) + H2O = (2S,4S)-4-hydroxy-2,3,4,5-tetrahydrodipicolinate + NADH + H(+). It carries out the reaction (S)-2,3,4,5-tetrahydrodipicolinate + NADP(+) + H2O = (2S,4S)-4-hydroxy-2,3,4,5-tetrahydrodipicolinate + NADPH + H(+). It participates in amino-acid biosynthesis; L-lysine biosynthesis via DAP pathway; (S)-tetrahydrodipicolinate from L-aspartate: step 4/4. Functionally, catalyzes the conversion of 4-hydroxy-tetrahydrodipicolinate (HTPA) to tetrahydrodipicolinate. The chain is 4-hydroxy-tetrahydrodipicolinate reductase from Streptococcus thermophilus (strain CNRZ 1066).